Here is a 64-residue protein sequence, read N- to C-terminus: Large ribosomal subunit protein bL35 (64 aa).

The disordered stretch occupies residues M1 to G56. Basic residues predominate over residues K23–K35.

It belongs to the bacterial ribosomal protein bL35 family.

This chain is Large ribosomal subunit protein bL35, found in Chlamydia abortus (strain DSM 27085 / S26/3) (Chlamydophila abortus).